Consider the following 545-residue polypeptide: Glucose-6-phosphate isomerase (545 aa).

Glu-349 serves as the catalytic Proton donor. Catalysis depends on residues His-380 and Lys-509.

The protein belongs to the GPI family.

The protein resides in the cytoplasm. It carries out the reaction alpha-D-glucose 6-phosphate = beta-D-fructose 6-phosphate. The protein operates within carbohydrate biosynthesis; gluconeogenesis. It participates in carbohydrate degradation; glycolysis; D-glyceraldehyde 3-phosphate and glycerone phosphate from D-glucose: step 2/4. Its function is as follows. Catalyzes the reversible isomerization of glucose-6-phosphate to fructose-6-phosphate. The chain is Glucose-6-phosphate isomerase from Chelativorans sp. (strain BNC1).